Consider the following 340-residue polypeptide: Lipopolysaccharide core biosynthesis glycosyltransferase LpsE (340 aa).

It belongs to the glycosyltransferase group 1 family. Glycosyltransferase 4 subfamily.

Its pathway is bacterial outer membrane biogenesis; LPS core biosynthesis. In Rhizobium meliloti (strain 1021) (Ensifer meliloti), this protein is Lipopolysaccharide core biosynthesis glycosyltransferase LpsE (lpsE).